We begin with the raw amino-acid sequence, 78 residues long: Large ribosomal subunit protein bL28 (78 aa).

This sequence belongs to the bacterial ribosomal protein bL28 family.

This is Large ribosomal subunit protein bL28 from Synechococcus sp. (strain JA-2-3B'a(2-13)) (Cyanobacteria bacterium Yellowstone B-Prime).